Reading from the N-terminus, the 334-residue chain is NADH-ubiquinone oxidoreductase chain 1 (334 aa).

Transmembrane regions (helical) follow at residues 4–24, 82–102, 115–135, 161–181, 187–207, 222–242, 247–267, 268–288, and 311–331; these read FVFLMIIETIHIILKILIIVI, FIYVAAPVLSFTLALIAWGVI, IGILFTLAVSSISVYAILMSG, IGLIIITVILCVGSLNITEIV, GIWFFFPLFPVAMMFFASALA, ELVSGYNVEYASMSFALFFLA, IILMSCLTTILFLGGWLSPIV, FFKGGPAWFGLKTSFIILLFI, and LPLSLAFVVLVASLLFGLNGL.

It belongs to the complex I subunit 1 family.

The protein resides in the mitochondrion inner membrane. It catalyses the reaction a ubiquinone + NADH + 5 H(+)(in) = a ubiquinol + NAD(+) + 4 H(+)(out). Functionally, core subunit of the mitochondrial membrane respiratory chain NADH dehydrogenase (Complex I) that is believed to belong to the minimal assembly required for catalysis. Complex I functions in the transfer of electrons from NADH to the respiratory chain. The immediate electron acceptor for the enzyme is believed to be ubiquinone. This is NADH-ubiquinone oxidoreductase chain 1 (ND1) from Metridium senile (Brown sea anemone).